The primary structure comprises 313 residues: Homoserine O-succinyltransferase (313 aa).

The active-site Acyl-thioester intermediate is C142. K163 and S192 together coordinate substrate. H235 functions as the Proton acceptor in the catalytic mechanism. Residue E237 is part of the active site. R249 contributes to the substrate binding site.

Belongs to the MetA family.

It is found in the cytoplasm. The catalysed reaction is L-homoserine + succinyl-CoA = O-succinyl-L-homoserine + CoA. Its pathway is amino-acid biosynthesis; L-methionine biosynthesis via de novo pathway; O-succinyl-L-homoserine from L-homoserine: step 1/1. Its function is as follows. Transfers a succinyl group from succinyl-CoA to L-homoserine, forming succinyl-L-homoserine. This chain is Homoserine O-succinyltransferase, found in Vibrio campbellii (strain ATCC BAA-1116).